The chain runs to 432 residues: Histidine--tRNA ligase (432 aa).

The protein belongs to the class-II aminoacyl-tRNA synthetase family. In terms of assembly, homodimer.

It localises to the cytoplasm. The catalysed reaction is tRNA(His) + L-histidine + ATP = L-histidyl-tRNA(His) + AMP + diphosphate + H(+). The protein is Histidine--tRNA ligase of Ralstonia nicotianae (strain ATCC BAA-1114 / GMI1000) (Ralstonia solanacearum).